The sequence spans 283 residues: tRNA pseudouridine synthase A (283 aa).

Aspartate 73 (nucleophile) is an active-site residue. The segment at 120–124 (FHARF) is RNA binding. Tyrosine 131 lines the substrate pocket. Positions 181-185 (QCQSR) are interaction with tRNA.

This sequence belongs to the tRNA pseudouridine synthase TruA family. In terms of assembly, homodimer.

It carries out the reaction uridine(38/39/40) in tRNA = pseudouridine(38/39/40) in tRNA. Its function is as follows. Formation of pseudouridine at positions 38, 39 and 40 in the anticodon stem and loop of transfer RNAs. The sequence is that of tRNA pseudouridine synthase A from Pectobacterium atrosepticum (strain SCRI 1043 / ATCC BAA-672) (Erwinia carotovora subsp. atroseptica).